A 697-amino-acid polypeptide reads, in one-letter code: Pentatricopeptide repeat-containing protein At2g13600 (697 aa).

PPR repeat units lie at residues Asp18–Asn53, Glu54–Arg84, Asn85–Arg115, Asp116–Leu150, Asn151–Ser185, Asp186–Arg216, Asn217–Pro251, Asp252–Asn282, Asp288–Ala322, Thr324–Arg349, Asn350–Pro384, Thr385–Phe419, Asp426–Arg456, Asp457–Pro491, Asp492–Pro527, and Leu528–Gln558. A type E motif region spans residues Ile563–Gln638. The interval Gly639–Arg669 is type E(+) motif.

Belongs to the PPR family. PCMP-E subfamily.

This is Pentatricopeptide repeat-containing protein At2g13600 (PCMP-E76) from Arabidopsis thaliana (Mouse-ear cress).